Reading from the N-terminus, the 318-residue chain is Ribonuclease Z (318 aa).

Zn(2+) contacts are provided by H62, H64, D66, H67, H144, D215, and H273. The active-site Proton acceptor is the D66.

The protein belongs to the RNase Z family. As to quaternary structure, homodimer. Requires Zn(2+) as cofactor.

The catalysed reaction is Endonucleolytic cleavage of RNA, removing extra 3' nucleotides from tRNA precursor, generating 3' termini of tRNAs. A 3'-hydroxy group is left at the tRNA terminus and a 5'-phosphoryl group is left at the trailer molecule.. Its function is as follows. Zinc phosphodiesterase, which displays some tRNA 3'-processing endonuclease activity. Probably involved in tRNA maturation, by removing a 3'-trailer from precursor tRNA. In Prochlorococcus marinus (strain MIT 9303), this protein is Ribonuclease Z.